Consider the following 395-residue polypeptide: NADH-quinone oxidoreductase subunit D (395 aa).

Belongs to the complex I 49 kDa subunit family. As to quaternary structure, NDH-1 is composed of 14 different subunits. Subunits NuoB, C, D, E, F, and G constitute the peripheral sector of the complex.

It localises to the cell inner membrane. The enzyme catalyses a quinone + NADH + 5 H(+)(in) = a quinol + NAD(+) + 4 H(+)(out). In terms of biological role, NDH-1 shuttles electrons from NADH, via FMN and iron-sulfur (Fe-S) centers, to quinones in the respiratory chain. The immediate electron acceptor for the enzyme in this species is believed to be a menaquinone. Couples the redox reaction to proton translocation (for every two electrons transferred, four hydrogen ions are translocated across the cytoplasmic membrane), and thus conserves the redox energy in a proton gradient. The polypeptide is NADH-quinone oxidoreductase subunit D (Chlorobium luteolum (strain DSM 273 / BCRC 81028 / 2530) (Pelodictyon luteolum)).